A 110-amino-acid chain; its full sequence is Large ribosomal subunit protein uL22 (110 aa).

The protein belongs to the universal ribosomal protein uL22 family. In terms of assembly, part of the 50S ribosomal subunit.

This protein binds specifically to 23S rRNA; its binding is stimulated by other ribosomal proteins, e.g. L4, L17, and L20. It is important during the early stages of 50S assembly. It makes multiple contacts with different domains of the 23S rRNA in the assembled 50S subunit and ribosome. Functionally, the globular domain of the protein is located near the polypeptide exit tunnel on the outside of the subunit, while an extended beta-hairpin is found that lines the wall of the exit tunnel in the center of the 70S ribosome. The protein is Large ribosomal subunit protein uL22 of Marinomonas sp. (strain MWYL1).